The primary structure comprises 545 residues: Glucose-6-phosphate isomerase (545 aa).

Glutamate 351 acts as the Proton donor in catalysis. Catalysis depends on residues histidine 382 and lysine 510.

This sequence belongs to the GPI family.

It is found in the cytoplasm. The enzyme catalyses alpha-D-glucose 6-phosphate = beta-D-fructose 6-phosphate. It participates in carbohydrate biosynthesis; gluconeogenesis. It functions in the pathway carbohydrate degradation; glycolysis; D-glyceraldehyde 3-phosphate and glycerone phosphate from D-glucose: step 2/4. Its function is as follows. Catalyzes the reversible isomerization of glucose-6-phosphate to fructose-6-phosphate. This is Glucose-6-phosphate isomerase from Helicobacter pylori (strain Shi470).